A 643-amino-acid polypeptide reads, in one-letter code: PRVRSFIAHQSGITSVIRRSPDIAHRMVRSLSVSSQRNKSVAHHEDVYSHNLPPMDEKEMALYKLYRPERVTPKKRSAELLKEPRLNKGMGFSLYERQYLGLHGLLPPAFMTQEQQAYRVITKLREQPNDLARYIQLDGLQDRNEKLFYRVVCDHVKELMPIVYTPTVGLACQNFGYIYRKPKGLYITINDNSVSKIYQILSNWHEEDVRAIVVTDGERILGLGDLGAYGIGIPVGKLALYVALGGVQPKWCLPVLLDVGTNNMDLLNDPFYIGLRHKRVRGKDYDTLLDNFMKACTKKYGQKTLIQFEDFANPNAFRLLDKYQDKYTMFNDDIQGTASVIVAGLLTCTRVTKKLVSQEKYLFFGAGAASTGIAEMIVHQMQNEGISKEEACNRIYLMDIDGLVTKNRKEMNPRHVQFAKDMPETTSILEVIRAARPGALIGASTVRGAFNEEVIRAMAEINERPIIFALSNPTSKAECTAEEAYTFTNGAALYASGSPFPNFELNGHTYKPGQGNNAYIFPGVALGTILFQIRHVDNDLFLLAAKKVASCVTEDSLKVGRVYPQLKEIREISIQIAVEMAKYCYKNGTANLYPQPEDLEKYVRAQVYNTEYEELINATYDWPEQDMRHGFPVPVVRHDSMDG.

Residues 1–38 (PRVRSFIAHQSGITSVIRRSPDIAHRMVRSLSVSSQRN) constitute a mitochondrion transit peptide. Residues Q116, R119, and R143 each coordinate fumarate. Y164 (proton donor) is an active-site residue. R219 serves as a coordination point for (S)-malate. R219 is a binding site for NAD(+). K237 (proton acceptor) is an active-site residue. A divalent metal cation-binding residues include E309 and D310. Positions 313, 333, 366, 369, and 472 each coordinate NAD(+). Residue D333 coordinates a divalent metal cation. (S)-malate is bound by residues N472 and N516.

Belongs to the malic enzymes family. In terms of assembly, homotetramer. Mg(2+) is required as a cofactor. Mn(2+) serves as cofactor.

It localises to the mitochondrion matrix. The enzyme catalyses (S)-malate + NAD(+) = pyruvate + CO2 + NADH. It catalyses the reaction oxaloacetate + H(+) = pyruvate + CO2. Subject to allosteric activation by fumarate. NAD-dependent mitochondrial malic enzyme that catalyzes the oxidative decarboxylation of malate to pyruvate. The chain is NAD-dependent malic enzyme, mitochondrial from Ascaris suum (Pig roundworm).